The chain runs to 384 residues: Mannitol-1-phosphate 5-dehydrogenase (384 aa).

3 to 14 (AVHFGAGNIGRG) lines the NAD(+) pocket.

Belongs to the mannitol dehydrogenase family.

The enzyme catalyses D-mannitol 1-phosphate + NAD(+) = beta-D-fructose 6-phosphate + NADH + H(+). This Arthrobacter sp. (strain FB24) protein is Mannitol-1-phosphate 5-dehydrogenase.